The following is a 431-amino-acid chain: UDP-N-acetylglucosamine 1-carboxyvinyltransferase (431 aa).

Residue 22 to 23 (KN) coordinates phosphoenolpyruvate. Arg-92 serves as a coordination point for UDP-N-acetyl-alpha-D-glucosamine. The active-site Proton donor is the Asp-116. UDP-N-acetyl-alpha-D-glucosamine is bound by residues 121–125 (RPIDQ), Asp-307, and Ile-330.

This sequence belongs to the EPSP synthase family. MurA subfamily.

The protein localises to the cytoplasm. It carries out the reaction phosphoenolpyruvate + UDP-N-acetyl-alpha-D-glucosamine = UDP-N-acetyl-3-O-(1-carboxyvinyl)-alpha-D-glucosamine + phosphate. It functions in the pathway cell wall biogenesis; peptidoglycan biosynthesis. In terms of biological role, cell wall formation. Adds enolpyruvyl to UDP-N-acetylglucosamine. The protein is UDP-N-acetylglucosamine 1-carboxyvinyltransferase of Lactobacillus acidophilus (strain ATCC 700396 / NCK56 / N2 / NCFM).